Consider the following 160-residue polypeptide: Ribosomal RNA large subunit methyltransferase H (160 aa).

S-adenosyl-L-methionine is bound by residues Leu76, Gly108, and 127 to 132; that span reads LGELTW.

This sequence belongs to the RNA methyltransferase RlmH family. As to quaternary structure, homodimer.

It localises to the cytoplasm. It carries out the reaction pseudouridine(1915) in 23S rRNA + S-adenosyl-L-methionine = N(3)-methylpseudouridine(1915) in 23S rRNA + S-adenosyl-L-homocysteine + H(+). In terms of biological role, specifically methylates the pseudouridine at position 1915 (m3Psi1915) in 23S rRNA. This chain is Ribosomal RNA large subunit methyltransferase H, found in Brucella anthropi (strain ATCC 49188 / DSM 6882 / CCUG 24695 / JCM 21032 / LMG 3331 / NBRC 15819 / NCTC 12168 / Alc 37) (Ochrobactrum anthropi).